The sequence spans 147 residues: Truncated RecQ DNA helicase-like protein C212.06c (147 aa).

Residues 1 to 72 enclose the Helicase C-terminal domain; sequence MGVRLVVHYR…CVRSFLASEM (72 aa). Residues 100-147 form a disordered region; it reads ETPKPAIATHSRYNASFSSSPPPQPGSSSGMSAMNTNTTSTTPVSGKT. Positions 125–141 are enriched in low complexity; it reads GSSSGMSAMNTNTTSTT.

This sequence belongs to the helicase family. RecQ subfamily.

Its function is as follows. Truncated ATP-dependent 3'-5' DNA helicase. This is Truncated RecQ DNA helicase-like protein C212.06c from Schizosaccharomyces pombe (strain 972 / ATCC 24843) (Fission yeast).